A 198-amino-acid chain; its full sequence is NADH-quinone oxidoreductase subunit I (198 aa).

2 consecutive 4Fe-4S ferredoxin-type domains span residues 42 to 72 (LNRW…VEGA) and 88 to 117 (RVYE…MTND). The [4Fe-4S] cluster site is built by C52, C55, C58, C62, C97, C100, C103, and C107. Residues 137–198 (APLKEGMEQP…DTQHKDEEAA (62 aa)) are disordered. Residues 182 to 198 (AHRDDDNDTQHKDEEAA) show a composition bias toward basic and acidic residues.

The protein belongs to the complex I 23 kDa subunit family. As to quaternary structure, NDH-1 is composed of 14 different subunits. Subunits NuoA, H, J, K, L, M, N constitute the membrane sector of the complex. Requires [4Fe-4S] cluster as cofactor.

Its subcellular location is the cell membrane. It carries out the reaction a quinone + NADH + 5 H(+)(in) = a quinol + NAD(+) + 4 H(+)(out). Its function is as follows. NDH-1 shuttles electrons from NADH, via FMN and iron-sulfur (Fe-S) centers, to quinones in the respiratory chain. The immediate electron acceptor for the enzyme in this species is believed to be ubiquinone. Couples the redox reaction to proton translocation (for every two electrons transferred, four hydrogen ions are translocated across the cytoplasmic membrane), and thus conserves the redox energy in a proton gradient. This Cutibacterium acnes (strain DSM 16379 / KPA171202) (Propionibacterium acnes) protein is NADH-quinone oxidoreductase subunit I.